Consider the following 204-residue polypeptide: UPF0637 protein SAR1080 (204 aa).

This sequence belongs to the UPF0637 family.

The protein is UPF0637 protein SAR1080 of Staphylococcus aureus (strain MRSA252).